Consider the following 470-residue polypeptide: Neuraminidase (470 aa).

Residues 1 to 6 lie on the Intravirion side of the membrane; that stretch reads MNPNQK. The helical transmembrane segment at 7 to 27 threads the bilayer; the sequence is IITIGSASIVLTTIGLLLQIT. Residues 11 to 33 are involved in apical transport and lipid raft association; the sequence is GSASIVLTTIGLLLQITSLCSIW. Over 28–470 the chain is Virion surface; that stretch reads SLCSIWFSHY…GALLPFDIDK (443 aa). The tract at residues 36–88 is hypervariable stalk region; the sequence is HYNQVTQPHEQACSNNTTNYYNETFVNVTNVQNNYTTIIEPSAPNVVHYSSGR. N50, N51, N57, N62, and N69 each carry an N-linked (GlcNAc...) asparagine; by host glycan. A head of neuraminidase region spans residues 90-470; that stretch reads LCPVKGWAPL…GALLPFDIDK (381 aa). Disulfide bonds link C91/C418, C123/C128, C183/C230, C232/C237, C278/C291, C280/C289, C317/C334, and C422/C447. Position 117 (R117) interacts with substrate. Residue N145 is glycosylated (N-linked (GlcNAc...) asparagine; by host). The active-site Proton donor/acceptor is the D150. Substrate is bound at residue R151. A glycan (N-linked (GlcNAc...) asparagine; by host) is linked at N269. 276–277 is a substrate binding site; that stretch reads EE. A substrate-binding site is contributed by R292. 3 residues coordinate Ca(2+): D293, G297, and D323. A substrate-binding site is contributed by R369. N-linked (GlcNAc...) asparagine; by host glycosylation occurs at N399. Y403 acts as the Nucleophile in catalysis. Residue N417 is glycosylated (N-linked (GlcNAc...) asparagine; by host).

It belongs to the glycosyl hydrolase 34 family. In terms of assembly, homotetramer. The cofactor is Ca(2+). Post-translationally, N-glycosylated.

The protein localises to the virion membrane. The protein resides in the host apical cell membrane. It catalyses the reaction Hydrolysis of alpha-(2-&gt;3)-, alpha-(2-&gt;6)-, alpha-(2-&gt;8)- glycosidic linkages of terminal sialic acid residues in oligosaccharides, glycoproteins, glycolipids, colominic acid and synthetic substrates.. Its activity is regulated as follows. Inhibited by the neuraminidase inhibitors zanamivir (Relenza) and oseltamivir (Tamiflu). These drugs interfere with the release of progeny virus from infected cells and are effective against all influenza strains. Resistance to neuraminidase inhibitors is quite rare. Functionally, catalyzes the removal of terminal sialic acid residues from viral and cellular glycoconjugates. Cleaves off the terminal sialic acids on the glycosylated HA during virus budding to facilitate virus release. Additionally helps virus spread through the circulation by further removing sialic acids from the cell surface. These cleavages prevent self-aggregation and ensure the efficient spread of the progeny virus from cell to cell. Otherwise, infection would be limited to one round of replication. Described as a receptor-destroying enzyme because it cleaves a terminal sialic acid from the cellular receptors. May facilitate viral invasion of the upper airways by cleaving the sialic acid moieties on the mucin of the airway epithelial cells. Likely to plays a role in the budding process through its association with lipid rafts during intracellular transport. May additionally display a raft-association independent effect on budding. Plays a role in the determination of host range restriction on replication and virulence. Sialidase activity in late endosome/lysosome traffic seems to enhance virus replication. The protein is Neuraminidase of Influenza A virus (strain A/Turkey/Ontario/6118/1968 H8N4).